Consider the following 200-residue polypeptide: Large ribosomal subunit protein uL4 (200 aa).

The segment at 38 to 75 (GRQGSKQQKNRSDVSGGGKRPWRQKGTGRARAGTSRGP) is disordered.

The protein belongs to the universal ribosomal protein uL4 family. As to quaternary structure, part of the 50S ribosomal subunit.

Its function is as follows. One of the primary rRNA binding proteins, this protein initially binds near the 5'-end of the 23S rRNA. It is important during the early stages of 50S assembly. It makes multiple contacts with different domains of the 23S rRNA in the assembled 50S subunit and ribosome. Forms part of the polypeptide exit tunnel. The polypeptide is Large ribosomal subunit protein uL4 (Azotobacter vinelandii (strain DJ / ATCC BAA-1303)).